Here is a 260-residue protein sequence, read N- to C-terminus: Cell wall synthesis protein Wag31 (260 aa).

A coiled-coil region spans residues 31–64 (FLDLVENELTRLIEENSDLRQRINELDQELAAGG). Thr73 bears the Phosphothreonine mark. The stretch at 161-196 (MLADAQSRSEAQLRQAQEKADALQADAERKHSEIMG) forms a coiled coil. The segment at 233-260 (ELGQRGSAAPVDSNADAGGFDQFNRGKN) is disordered.

It belongs to the DivIVA family. In terms of assembly, forms homooligomers. Phosphorylated by PknA. Phosphorylation enhances polar localization, which in turn heightens polar peptidoglycan biosynthesis.

Its subcellular location is the cytoplasm. Its function is as follows. Important for maintaining cell shape and cell wall integrity by localizing peptidoglycan synthesis to the cell poles. The chain is Cell wall synthesis protein Wag31 (wag31) from Mycobacterium tuberculosis (strain CDC 1551 / Oshkosh).